The following is a 349-amino-acid chain: D-alanine--D-alanine ligase (349 aa).

The ATP-grasp domain maps to 132–335 (KHVFEAVGVP…YSDLIEKLVD (204 aa)). Position 162–217 (162–217 (VEKLEFPVFVKPANMGSSVGISKVDDLADLQPALSEAYKYDNRVVIEQGVDAREIE)) interacts with ATP. Mg(2+)-binding residues include aspartate 289, glutamate 302, and asparagine 304.

This sequence belongs to the D-alanine--D-alanine ligase family. Mg(2+) is required as a cofactor. Requires Mn(2+) as cofactor.

The protein localises to the cytoplasm. It carries out the reaction 2 D-alanine + ATP = D-alanyl-D-alanine + ADP + phosphate + H(+). The protein operates within cell wall biogenesis; peptidoglycan biosynthesis. Cell wall formation. The polypeptide is D-alanine--D-alanine ligase (Lactococcus lactis subsp. lactis (strain IL1403) (Streptococcus lactis)).